The following is a 345-amino-acid chain: Uroporphyrinogen decarboxylase (345 aa).

Residues 24–28 (RQAGR), aspartate 74, tyrosine 150, serine 205, and histidine 318 contribute to the substrate site.

It belongs to the uroporphyrinogen decarboxylase family. In terms of assembly, homodimer.

Its subcellular location is the cytoplasm. It catalyses the reaction uroporphyrinogen III + 4 H(+) = coproporphyrinogen III + 4 CO2. It participates in porphyrin-containing compound metabolism; protoporphyrin-IX biosynthesis; coproporphyrinogen-III from 5-aminolevulinate: step 4/4. In terms of biological role, catalyzes the decarboxylation of four acetate groups of uroporphyrinogen-III to yield coproporphyrinogen-III. The polypeptide is Uroporphyrinogen decarboxylase (Dichelobacter nodosus (strain VCS1703A)).